The sequence spans 596 residues: Aspartate--tRNA(Asp/Asn) ligase (596 aa).

Glu-175 contacts L-aspartate. An aspartate region spans residues 199–202; it reads QQYK. L-aspartate-binding residues include Arg-221 and His-454. 221 to 223 is a binding site for ATP; sequence RDE. ATP is bound at residue Glu-488. An L-aspartate-binding site is contributed by Arg-495. Residue 540–543 participates in ATP binding; it reads GIDR.

The protein belongs to the class-II aminoacyl-tRNA synthetase family. Type 1 subfamily. As to quaternary structure, homodimer.

It is found in the cytoplasm. It carries out the reaction tRNA(Asx) + L-aspartate + ATP = L-aspartyl-tRNA(Asx) + AMP + diphosphate. Aspartyl-tRNA synthetase with relaxed tRNA specificity since it is able to aspartylate not only its cognate tRNA(Asp) but also tRNA(Asn). Reaction proceeds in two steps: L-aspartate is first activated by ATP to form Asp-AMP and then transferred to the acceptor end of tRNA(Asp/Asn). The polypeptide is Aspartate--tRNA(Asp/Asn) ligase (Rhizobium rhizogenes (strain K84 / ATCC BAA-868) (Agrobacterium radiobacter)).